Here is a 456-residue protein sequence, read N- to C-terminus: Exodeoxyribonuclease 7 large subunit (456 aa).

The protein belongs to the XseA family. In terms of assembly, heterooligomer composed of large and small subunits.

It localises to the cytoplasm. It catalyses the reaction Exonucleolytic cleavage in either 5'- to 3'- or 3'- to 5'-direction to yield nucleoside 5'-phosphates.. Bidirectionally degrades single-stranded DNA into large acid-insoluble oligonucleotides, which are then degraded further into small acid-soluble oligonucleotides. The chain is Exodeoxyribonuclease 7 large subunit from Azotobacter vinelandii (strain DJ / ATCC BAA-1303).